Reading from the N-terminus, the 319-residue chain is Ribonuclease Z (319 aa).

Zn(2+)-binding residues include His62, His64, Asp66, His67, His145, Asp215, and His273. Asp66 functions as the Proton acceptor in the catalytic mechanism.

It belongs to the RNase Z family. In terms of assembly, homodimer. Requires Zn(2+) as cofactor.

It carries out the reaction Endonucleolytic cleavage of RNA, removing extra 3' nucleotides from tRNA precursor, generating 3' termini of tRNAs. A 3'-hydroxy group is left at the tRNA terminus and a 5'-phosphoryl group is left at the trailer molecule.. Zinc phosphodiesterase, which displays some tRNA 3'-processing endonuclease activity. Probably involved in tRNA maturation, by removing a 3'-trailer from precursor tRNA. The sequence is that of Ribonuclease Z from Borreliella afzelii (strain PKo) (Borrelia afzelii).